The sequence spans 430 residues: Asparagine--tRNA ligase (430 aa).

The protein belongs to the class-II aminoacyl-tRNA synthetase family. Homodimer.

The protein resides in the cytoplasm. It carries out the reaction tRNA(Asn) + L-asparagine + ATP = L-asparaginyl-tRNA(Asn) + AMP + diphosphate + H(+). The protein is Asparagine--tRNA ligase of Staphylococcus aureus (strain MSSA476).